Consider the following 358-residue polypeptide: UDP-3-O-acylglucosamine N-acyltransferase (358 aa).

His-252 (proton acceptor) is an active-site residue.

The protein belongs to the transferase hexapeptide repeat family. LpxD subfamily. Homotrimer.

The enzyme catalyses a UDP-3-O-[(3R)-3-hydroxyacyl]-alpha-D-glucosamine + a (3R)-hydroxyacyl-[ACP] = a UDP-2-N,3-O-bis[(3R)-3-hydroxyacyl]-alpha-D-glucosamine + holo-[ACP] + H(+). It participates in bacterial outer membrane biogenesis; LPS lipid A biosynthesis. In terms of biological role, catalyzes the N-acylation of UDP-3-O-acylglucosamine using 3-hydroxyacyl-ACP as the acyl donor. Is involved in the biosynthesis of lipid A, a phosphorylated glycolipid that anchors the lipopolysaccharide to the outer membrane of the cell. This Paraburkholderia phymatum (strain DSM 17167 / CIP 108236 / LMG 21445 / STM815) (Burkholderia phymatum) protein is UDP-3-O-acylglucosamine N-acyltransferase.